A 416-amino-acid chain; its full sequence is Ribosome biogenesis protein WDR12 homolog (416 aa).

A ubiquitin-like (UBL) domain region spans residues 7 to 89 (VQVRFFTKQK…ESVVEIEYLE (83 aa)). 7 WD repeats span residues 101–138 (VHDD…LAKV), 140–184 (GHTS…ASCV), 189–228 (GHTQ…EGGD), 259–297 (GHTQ…NKQT), 299–338 (TGSK…GQVV), 344–384 (SHQG…TPLY), and 388–416 (GHQD…LILY). The interval 226–245 (GGDEGENGSLSKKQKTTGVK) is disordered.

The protein belongs to the WD repeat WDR12/YTM1 family.

The protein resides in the nucleus. It is found in the nucleolus. The protein localises to the nucleoplasm. Required for maturation of ribosomal RNAs and formation of the large ribosomal subunit. In Nematostella vectensis (Starlet sea anemone), this protein is Ribosome biogenesis protein WDR12 homolog.